Consider the following 176-residue polypeptide: Calcineurin subunit B type 2 (176 aa).

G2 is lipidated: N-myristoyl glycine. EF-hand domains lie at 18-53 (DEIK…QQNP), 57-85 (RVID…FSVK), 87-122 (DEEQ…MVGN), and 128-163 (QLQQ…MEIH). Ca(2+) contacts are provided by D31, D33, S35, S37, E42, D63, D65, N67, E69, E74, D100, D102, D104, and E111. Residues 131 to 136 (QLVDKS) are calcineurin A binding. 5 residues coordinate Ca(2+): D141, D143, D145, R147, and E152.

Belongs to the calcineurin regulatory subunit family. In terms of assembly, forms a complex composed of a calmodulin-dependent catalytic subunit (also known as calcineurin A) and a regulatory Ca(2+)-binding subunit (also known as calcineurin B). There are three catalytic subunits, each encoded by a separate gene (PPP3CA, PPP3CB, and PPP3CC) and two regulatory subunits which are also encoded by separate genes (PPP3R1 and PPP3R2). Interacts with SPATA33 (via PQIIIT motif). As to expression, testis specific.

It localises to the mitochondrion. In terms of biological role, regulatory subunit of calcineurin, a calcium-dependent, calmodulin stimulated protein phosphatase. Confers calcium sensitivity. The polypeptide is Calcineurin subunit B type 2 (Ppp3r2) (Rattus norvegicus (Rat)).